Reading from the N-terminus, the 178-residue chain is ATP synthase subunit delta (178 aa).

This sequence belongs to the ATPase delta chain family. As to quaternary structure, F-type ATPases have 2 components, F(1) - the catalytic core - and F(0) - the membrane proton channel. F(1) has five subunits: alpha(3), beta(3), gamma(1), delta(1), epsilon(1). F(0) has three main subunits: a(1), b(2) and c(10-14). The alpha and beta chains form an alternating ring which encloses part of the gamma chain. F(1) is attached to F(0) by a central stalk formed by the gamma and epsilon chains, while a peripheral stalk is formed by the delta and b chains.

It is found in the cell membrane. Functionally, f(1)F(0) ATP synthase produces ATP from ADP in the presence of a proton or sodium gradient. F-type ATPases consist of two structural domains, F(1) containing the extramembraneous catalytic core and F(0) containing the membrane proton channel, linked together by a central stalk and a peripheral stalk. During catalysis, ATP synthesis in the catalytic domain of F(1) is coupled via a rotary mechanism of the central stalk subunits to proton translocation. Its function is as follows. This protein is part of the stalk that links CF(0) to CF(1). It either transmits conformational changes from CF(0) to CF(1) or is implicated in proton conduction. The sequence is that of ATP synthase subunit delta from Lysinibacillus sphaericus (strain C3-41).